The following is a 209-amino-acid chain: Outer-membrane lipoprotein LolB (209 aa).

The signal sequence occupies residues 1–17 (MATVFSRALGALVLGVA). Cysteine 18 is lipidated: N-palmitoyl cysteine. Cysteine 18 carries the S-diacylglycerol cysteine lipid modification.

This sequence belongs to the LolB family. In terms of assembly, monomer.

Its subcellular location is the cell outer membrane. Plays a critical role in the incorporation of lipoproteins in the outer membrane after they are released by the LolA protein. The chain is Outer-membrane lipoprotein LolB from Ralstonia nicotianae (strain ATCC BAA-1114 / GMI1000) (Ralstonia solanacearum).